A 98-amino-acid chain; its full sequence is NADH-quinone oxidoreductase subunit K (98 aa).

3 helical membrane-spanning segments follow: residues 1-21 (MGHL…GIFL), 27-47 (IVLL…FIAF), and 59-79 (FVFF…AILV).

This sequence belongs to the complex I subunit 4L family. In terms of assembly, NDH-1 is composed of 14 different subunits. Subunits NuoA, H, J, K, L, M, N constitute the membrane sector of the complex.

The protein localises to the cell inner membrane. The catalysed reaction is a quinone + NADH + 5 H(+)(in) = a quinol + NAD(+) + 4 H(+)(out). Functionally, NDH-1 shuttles electrons from NADH, via FMN and iron-sulfur (Fe-S) centers, to quinones in the respiratory chain. The immediate electron acceptor for the enzyme in this species is believed to be ubiquinone. Couples the redox reaction to proton translocation (for every two electrons transferred, four hydrogen ions are translocated across the cytoplasmic membrane), and thus conserves the redox energy in a proton gradient. This is NADH-quinone oxidoreductase subunit K from Xanthomonas oryzae pv. oryzae (strain PXO99A).